Consider the following 389-residue polypeptide: Oxysterol-binding protein 1 (389 aa).

Coiled-coil stretches lie at residues Met1 to Ala31 and Lys340 to Lys371. The tract at residues Met1 to Asp43 is disordered.

This sequence belongs to the OSBP family. In terms of assembly, interacts with dstC.

It localises to the cytoplasm. Its function is as follows. May play a role in the regulation of the slug-fruiting body switch. The protein is Oxysterol-binding protein 1 (osbA) of Dictyostelium discoideum (Social amoeba).